The following is a 550-amino-acid chain: Dipeptide-binding protein (550 aa).

The signal sequence occupies residues 1–22 (MKQAKIIGLSTVIALSGIILVA). C23 carries the N-palmitoyl cysteine lipid modification. C23 is lipidated: S-diacylglycerol cysteine.

The protein belongs to the bacterial solute-binding protein 5 family. In terms of assembly, the complex is composed of two ATP-binding proteins (DppD and DppF), two transmembrane proteins (DppB and DppC) and a solute-binding protein (DppA).

It localises to the cell membrane. Functionally, part of the ABC transporter DppABCDF involved in dipeptide transport. Binds di- and tripeptides with high affinity. Requires a free N-terminal alpha-amino group and an alpha-peptide bound contiguous with the N-terminal amino group, has a strong selectivity for L-residues, and shows preference for dipeptides containing methionine or arginine, followed by hydrophobic tripeptides consisting of leucine or valine residues. The sequence is that of Dipeptide-binding protein from Lactococcus lactis subsp. cremoris (strain MG1363).